Here is a 156-residue protein sequence, read N- to C-terminus: ATP synthase subunit b (156 aa).

A helical transmembrane segment spans residues 7-27 (LIGQTVAFIIFVWFCMKFVWP).

It belongs to the ATPase B chain family. F-type ATPases have 2 components, F(1) - the catalytic core - and F(0) - the membrane proton channel. F(1) has five subunits: alpha(3), beta(3), gamma(1), delta(1), epsilon(1). F(0) has three main subunits: a(1), b(2) and c(10-14). The alpha and beta chains form an alternating ring which encloses part of the gamma chain. F(1) is attached to F(0) by a central stalk formed by the gamma and epsilon chains, while a peripheral stalk is formed by the delta and b chains.

It is found in the cell inner membrane. In terms of biological role, f(1)F(0) ATP synthase produces ATP from ADP in the presence of a proton or sodium gradient. F-type ATPases consist of two structural domains, F(1) containing the extramembraneous catalytic core and F(0) containing the membrane proton channel, linked together by a central stalk and a peripheral stalk. During catalysis, ATP synthesis in the catalytic domain of F(1) is coupled via a rotary mechanism of the central stalk subunits to proton translocation. Its function is as follows. Component of the F(0) channel, it forms part of the peripheral stalk, linking F(1) to F(0). This chain is ATP synthase subunit b, found in Shewanella sp. (strain ANA-3).